Consider the following 338-residue polypeptide: Lipoate-protein ligase A (338 aa).

The BPL/LPL catalytic domain maps to 29–216 (PATQRVLFLW…AFFAHYGERV (188 aa)). ATP contacts are provided by residues Arg71, 76 to 79 (GAVF), and Lys134. Residue Lys134 coordinates (R)-lipoate.

This sequence belongs to the LplA family. Monomer.

The protein resides in the cytoplasm. The enzyme catalyses L-lysyl-[lipoyl-carrier protein] + (R)-lipoate + ATP = N(6)-[(R)-lipoyl]-L-lysyl-[lipoyl-carrier protein] + AMP + diphosphate + H(+). It participates in protein modification; protein lipoylation via exogenous pathway; protein N(6)-(lipoyl)lysine from lipoate: step 1/2. It functions in the pathway protein modification; protein lipoylation via exogenous pathway; protein N(6)-(lipoyl)lysine from lipoate: step 2/2. Functionally, catalyzes both the ATP-dependent activation of exogenously supplied lipoate to lipoyl-AMP and the transfer of the activated lipoyl onto the lipoyl domains of lipoate-dependent enzymes. The polypeptide is Lipoate-protein ligase A (Escherichia coli O6:H1 (strain CFT073 / ATCC 700928 / UPEC)).